The sequence spans 211 residues: Probable GTP-binding protein EngB (211 aa).

The EngB-type G domain maps to 26–200 (SGIEVAFAGR…RQKLDNWFST (175 aa)). Residues 34–41 (GRSNAGKS), 61–65 (GRTQL), 79–82 (DLPG), 146–149 (TKAD), and 179–181 (FSS) each bind GTP. Mg(2+) contacts are provided by serine 41 and threonine 63.

It belongs to the TRAFAC class TrmE-Era-EngA-EngB-Septin-like GTPase superfamily. EngB GTPase family. Mg(2+) is required as a cofactor.

Necessary for normal cell division and for the maintenance of normal septation. This Pectobacterium carotovorum subsp. carotovorum (strain PC1) protein is Probable GTP-binding protein EngB.